Here is a 397-residue protein sequence, read N- to C-terminus: Subtilisin-like protease 12 (397 aa).

Residues 1–19 (MSIFKMMLIYFAILWVVNA) form the signal peptide. The propeptide occupies 20-116 (AQLLDIDPQG…VEPNKEMQVA (97 aa)). Residues 35-115 (YIVVMKDRVS…FVEPNKEMQV (81 aa)) enclose the Inhibitor I9 domain. Asparagine 123, asparagine 136, and asparagine 150 each carry an N-linked (GlcNAc...) asparagine glycan. Residues 125–397 (TWGLSRISHK…NKLLYNGSGA (273 aa)) enclose the Peptidase S8 domain. Catalysis depends on charge relay system residues aspartate 157 and histidine 188. N-linked (GlcNAc...) asparagine glycosylation is found at asparagine 249, asparagine 305, and asparagine 334. Catalysis depends on serine 343, which acts as the Charge relay system. Residues asparagine 385 and asparagine 393 are each glycosylated (N-linked (GlcNAc...) asparagine).

This sequence belongs to the peptidase S8 family.

Its subcellular location is the secreted. In terms of biological role, secreted subtilisin-like serine protease with keratinolytic activity that contributes to pathogenicity. The chain is Subtilisin-like protease 12 (SUB12) from Trichophyton verrucosum (strain HKI 0517).